The primary structure comprises 589 residues: Actin-histidine N-methyltransferase (589 aa).

Residues 1–22 are disordered; it reads MGKKSRVKTQKSGTGATATVSP. Residues 10–20 show a composition bias toward polar residues; sequence QKSGTGATATV. S-adenosyl-L-methionine contacts are provided by residues Arg75, 104–106, Arg254, 275–279, and 325–327; these read EGF, DMCNH, and SGF. The region spanning 94 to 314 is the SET domain; it reads EGFEMVNFKE…AGEQIYIFYG (221 aa). Phosphoserine is present on Ser513. Residues 547 to 589 are disordered; sequence LVNGERSFPNGTRSEEDLKQEERKRAKGDAKESSSDSTDAVKE. The span at 559 to 589 shows a compositional bias: basic and acidic residues; the sequence is RSEEDLKQEERKRAKGDAKESSSDSTDAVKE.

It belongs to the class V-like SAM-binding methyltransferase superfamily. SETD3 actin-histidine methyltransferase family. In terms of assembly, interacts with MYOD1. In terms of processing, phosphorylated by GSK3B, which is required for recognition by the SCF(FBXW7) complex and subsequent degradation. Post-translationally, ubiquitinated by the SCF(FBXW7) complex following phosphorylation by GSK3B, leading to its degradation by the proteasome.

The protein resides in the cytoplasm. Its subcellular location is the nucleus. It catalyses the reaction L-histidyl-[protein] + S-adenosyl-L-methionine = N(tele)-methyl-L-histidyl-[protein] + S-adenosyl-L-homocysteine + H(+). In terms of biological role, protein-histidine N-methyltransferase that specifically mediates 3-methylhistidine (tele-methylhistidine) methylation of actin at 'His-73'. Histidine methylation of actin is required for smooth muscle contraction of the laboring uterus during delivery. Does not have protein-lysine N-methyltransferase activity and probably only catalyzes histidine methylation of actin. This chain is Actin-histidine N-methyltransferase, found in Dasypus novemcinctus (Nine-banded armadillo).